A 435-amino-acid polypeptide reads, in one-letter code: Serine--tRNA ligase (435 aa).

242–244 serves as a coordination point for L-serine; sequence TAE. Residue 273–275 participates in ATP binding; that stretch reads RSE. Glu296 is an L-serine binding site. 360 to 363 provides a ligand contact to ATP; that stretch reads EISS. Ser396 contributes to the L-serine binding site.

Belongs to the class-II aminoacyl-tRNA synthetase family. Type-1 seryl-tRNA synthetase subfamily. As to quaternary structure, homodimer. The tRNA molecule binds across the dimer.

Its subcellular location is the cytoplasm. The enzyme catalyses tRNA(Ser) + L-serine + ATP = L-seryl-tRNA(Ser) + AMP + diphosphate + H(+). It catalyses the reaction tRNA(Sec) + L-serine + ATP = L-seryl-tRNA(Sec) + AMP + diphosphate + H(+). It participates in aminoacyl-tRNA biosynthesis; selenocysteinyl-tRNA(Sec) biosynthesis; L-seryl-tRNA(Sec) from L-serine and tRNA(Sec): step 1/1. In terms of biological role, catalyzes the attachment of serine to tRNA(Ser). Is also able to aminoacylate tRNA(Sec) with serine, to form the misacylated tRNA L-seryl-tRNA(Sec), which will be further converted into selenocysteinyl-tRNA(Sec). The polypeptide is Serine--tRNA ligase (Vibrio parahaemolyticus serotype O3:K6 (strain RIMD 2210633)).